The primary structure comprises 146 residues: uncharacterized protein (146 aa).

Residues 1–137 (MLSQEFFNSF…TINVMNQIHE (137 aa)) form the HTH marR-type domain.

This is an uncharacterized protein from Staphylococcus aureus (strain MRSA252).